A 258-amino-acid polypeptide reads, in one-letter code: Isoprenyl transferase (258 aa).

The active site involves D38. D38 provides a ligand contact to Mg(2+). Substrate is bound by residues 39 to 42 (GNGR), W43, R51, H55, and 83 to 85 (STE). N86 acts as the Proton acceptor in catalysis. Residues W87, R89, R206, and 212–214 (RIS) contribute to the substrate site. Mg(2+) is bound at residue E225.

The protein belongs to the UPP synthase family. In terms of assembly, homodimer. Mg(2+) is required as a cofactor.

In terms of biological role, catalyzes the condensation of isopentenyl diphosphate (IPP) with allylic pyrophosphates generating different type of terpenoids. This Bacillus anthracis protein is Isoprenyl transferase.